A 527-amino-acid polypeptide reads, in one-letter code: ATP synthase subunit alpha (527 aa).

172 to 179 (GDRQTGKT) contacts ATP.

Belongs to the ATPase alpha/beta chains family. F-type ATPases have 2 components, CF(1) - the catalytic core - and CF(0) - the membrane proton channel. CF(1) has five subunits: alpha(3), beta(3), gamma(1), delta(1), epsilon(1). CF(0) has three main subunits: a(1), b(2) and c(9-12). The alpha and beta chains form an alternating ring which encloses part of the gamma chain. CF(1) is attached to CF(0) by a central stalk formed by the gamma and epsilon chains, while a peripheral stalk is formed by the delta and b chains.

The protein localises to the cell inner membrane. It catalyses the reaction ATP + H2O + 4 H(+)(in) = ADP + phosphate + 5 H(+)(out). Functionally, produces ATP from ADP in the presence of a proton gradient across the membrane. The alpha chain is a regulatory subunit. This Bacteroides fragilis (strain ATCC 25285 / DSM 2151 / CCUG 4856 / JCM 11019 / LMG 10263 / NCTC 9343 / Onslow / VPI 2553 / EN-2) protein is ATP synthase subunit alpha.